The sequence spans 140 residues: uncharacterized protein (140 aa).

The stretch at 27–65 (LLGEVSELELQKICFNRSLRNEINQLEEQNDISFVRVER) forms a coiled coil.

This is an uncharacterized protein from Pasteurella multocida (strain Pm70).